The chain runs to 205 residues: Cell wall / vacuolar inhibitor of fructosidase 1 (205 aa).

The signal sequence occupies residues 1–23 (MKMMKVMMLIVMMMMVMVMVSEG). 2 disulfides stabilise this stretch: cysteine 30-cysteine 39 and cysteine 93-cysteine 134. N-linked (GlcNAc...) asparagine glycosylation is found at asparagine 139 and asparagine 156.

It belongs to the PMEI family. In terms of tissue distribution, mostly expressed in roots, senescent leaves and flowers (in sepals), and, to a lower extent, in stems, specifically in the vascular tissues (e.g. in the phloem).

Its subcellular location is the vacuole. Its function is as follows. Inhibits fructosidases from vacuoles (vacuolar invertase VI). This Arabidopsis thaliana (Mouse-ear cress) protein is Cell wall / vacuolar inhibitor of fructosidase 1 (C/VIF1).